Here is a 118-residue protein sequence, read N- to C-terminus: Small ribosomal subunit protein uS13 (118 aa).

A disordered region spans residues 92 to 118 (KKHLPVRGQRTKTNARTRKGPRKPIKK).

The protein belongs to the universal ribosomal protein uS13 family. In terms of assembly, part of the 30S ribosomal subunit. Forms a loose heterodimer with protein S19. Forms two bridges to the 50S subunit in the 70S ribosome.

In terms of biological role, located at the top of the head of the 30S subunit, it contacts several helices of the 16S rRNA. In the 70S ribosome it contacts the 23S rRNA (bridge B1a) and protein L5 of the 50S subunit (bridge B1b), connecting the 2 subunits; these bridges are implicated in subunit movement. Contacts the tRNAs in the A and P-sites. The polypeptide is Small ribosomal subunit protein uS13 (Wigglesworthia glossinidia brevipalpis).